The primary structure comprises 550 residues: Zinc finger protein 426 (550 aa).

One can recognise a KRAB domain in the interval 39-110 (VSFEDVIVDF…KIVFPEWKLQ (72 aa)). C2H2-type zinc fingers lie at residues 219–241 (FECSDCGKSFMSQSHLQTHQRTH), 274–296 (HRCKECGKGYRYPAYLNIHMRTH), 302–324 (YECKECGKAFNYSNSFQIHGRTH), 330–352 (YVCSQCGKAFTQHSGLSIHVRSH), 358–380 (YGCKECGKAFLTSSRLIQHIRTH), 386–408 (FVCVKCGKAFAISSNLNGHLKLH), 414–436 (CECKICGKAFGYLSCLNNHMRTH), 442–464 (YTCKECGKAFNYSTHLKIHMRIH), 470–492 (YECKQCGKAFSHSTSFQIHERTH), 498–522 (YECKECGKAFICPSSFRIHEISHTH), and 528–550 (YKCQQCGKAYSHPRSLRRHERIH).

The protein localises to the nucleus. In terms of biological role, may be involved in transcriptional regulation. The chain is Zinc finger protein 426 (Znf426) from Mus musculus (Mouse).